Consider the following 415-residue polypeptide: MEQIRLLLLLTIRVLSGSAQFNGYNCDANLHSRFPAERDISVYCGVQAITMKINFCTVLFSGYSETDLALNGRHGDSHCRGFINNNTFPAVVIFIINLSTLEGCGNNLVVSTIPGVSAYGNATSVQIGNISGYIDTPDPPTIISYLPGLLYKFSCSYPLEYLVNNTQLASSSAAISVRENNGTFVSTLNLLLYNDSTYNQQLIIPSIGLPLKTKVFAAVQATNLDGRWNVLMDYCYTTPSGNPNDDIRYDLFLSCDKDPQTTVIENGRSQRGRFSFEVFRFVKHKNQKMSTVFLHCVTKLCRADDCPFLMPICSHRERRDAGRRTTWSSQSSSGSAVLSAGPIITRSDETPTNNSQLGSPSVPPFQLNAITSALISGMVILGVMSFSLLVCPLALLHRKGPTSLVLNGIRNPVFD.

Positions 1-19 are cleaved as a signal peptide; the sequence is MEQIRLLLLLTIRVLSGSA. Topologically, residues 20 to 372 are extracellular; it reads QFNGYNCDAN…PPFQLNAITS (353 aa). The 278-residue stretch at 43–320 folds into the ZP domain; it reads YCGVQAITMK…PICSHRERRD (278 aa). Disulfide bonds link cysteine 44/cysteine 155 and cysteine 79/cysteine 104. An N-linked (GlcNAc...) asparagine glycan is attached at asparagine 164. 2 disulfides stabilise this stretch: cysteine 235–cysteine 296 and cysteine 255–cysteine 313. The disordered stretch occupies residues 323–359; the sequence is RRTTWSSQSSSGSAVLSAGPIITRSDETPTNNSQLGS. Positions 328–339 are enriched in low complexity; sequence SSQSSSGSAVLS. Over residues 350–359 the composition is skewed to polar residues; it reads TPTNNSQLGS. Residues 373-393 traverse the membrane as a helical segment; sequence ALISGMVILGVMSFSLLVCPL. Residues 394–415 lie on the Cytoplasmic side of the membrane; sequence ALLHRKGPTSLVLNGIRNPVFD.

Post-translationally, proteolytically cleaved before the transmembrane segment to yield the secreted form found in the extracellular matrix of the cupula.

The protein resides in the cytoplasmic vesicle membrane. Its subcellular location is the secreted. It is found in the extracellular space. The protein localises to the extracellular matrix. Functionally, glycoprotein which is a component of the gelatinous extracellular matrix in the cupulae of the vestibular organ. This Macaca fascicularis (Crab-eating macaque) protein is Zona pellucida-like domain-containing protein 1 (ZPLD1).